Consider the following 211-residue polypeptide: Thiamine-phosphate synthase (211 aa).

4-amino-2-methyl-5-(diphosphooxymethyl)pyrimidine-binding positions include 37–41 (QLRIK) and N69. Residues D70 and D89 each coordinate Mg(2+). S108 lines the 4-amino-2-methyl-5-(diphosphooxymethyl)pyrimidine pocket. Position 134 to 136 (134 to 136 (TQT)) interacts with 2-[(2R,5Z)-2-carboxy-4-methylthiazol-5(2H)-ylidene]ethyl phosphate. K137 contacts 4-amino-2-methyl-5-(diphosphooxymethyl)pyrimidine. 2-[(2R,5Z)-2-carboxy-4-methylthiazol-5(2H)-ylidene]ethyl phosphate-binding positions include G166 and 186-187 (VS).

This sequence belongs to the thiamine-phosphate synthase family. The cofactor is Mg(2+).

It carries out the reaction 2-[(2R,5Z)-2-carboxy-4-methylthiazol-5(2H)-ylidene]ethyl phosphate + 4-amino-2-methyl-5-(diphosphooxymethyl)pyrimidine + 2 H(+) = thiamine phosphate + CO2 + diphosphate. It catalyses the reaction 2-(2-carboxy-4-methylthiazol-5-yl)ethyl phosphate + 4-amino-2-methyl-5-(diphosphooxymethyl)pyrimidine + 2 H(+) = thiamine phosphate + CO2 + diphosphate. The catalysed reaction is 4-methyl-5-(2-phosphooxyethyl)-thiazole + 4-amino-2-methyl-5-(diphosphooxymethyl)pyrimidine + H(+) = thiamine phosphate + diphosphate. Its pathway is cofactor biosynthesis; thiamine diphosphate biosynthesis; thiamine phosphate from 4-amino-2-methyl-5-diphosphomethylpyrimidine and 4-methyl-5-(2-phosphoethyl)-thiazole: step 1/1. Condenses 4-methyl-5-(beta-hydroxyethyl)thiazole monophosphate (THZ-P) and 2-methyl-4-amino-5-hydroxymethyl pyrimidine pyrophosphate (HMP-PP) to form thiamine monophosphate (TMP). In Escherichia coli O6:H1 (strain CFT073 / ATCC 700928 / UPEC), this protein is Thiamine-phosphate synthase.